A 236-amino-acid polypeptide reads, in one-letter code: (5-formylfuran-3-yl)methyl phosphate synthase (236 aa).

The active-site Schiff-base intermediate with substrate is lysine 27. Lysine 85 (proton acceptor) is an active-site residue.

Belongs to the MfnB family.

The enzyme catalyses 2 D-glyceraldehyde 3-phosphate = 4-(hydroxymethyl)-2-furancarboxaldehyde phosphate + phosphate + 2 H2O. Its pathway is cofactor biosynthesis; methanofuran biosynthesis. Catalyzes the formation of 4-(hydroxymethyl)-2-furancarboxaldehyde phosphate (4-HFC-P) from two molecules of glyceraldehyde-3-P (GA-3-P). This Methanothermobacter thermautotrophicus (strain ATCC 29096 / DSM 1053 / JCM 10044 / NBRC 100330 / Delta H) (Methanobacterium thermoautotrophicum) protein is (5-formylfuran-3-yl)methyl phosphate synthase.